Reading from the N-terminus, the 438-residue chain is Trigger factor (438 aa).

The 86-residue stretch at 160 to 245 (DDKVTIDFVG…VKKIQQAELP (86 aa)) folds into the PPIase FKBP-type domain.

This sequence belongs to the FKBP-type PPIase family. Tig subfamily.

It is found in the cytoplasm. The catalysed reaction is [protein]-peptidylproline (omega=180) = [protein]-peptidylproline (omega=0). Involved in protein export. Acts as a chaperone by maintaining the newly synthesized protein in an open conformation. Functions as a peptidyl-prolyl cis-trans isomerase. This Francisella tularensis subsp. novicida (strain U112) protein is Trigger factor.